Reading from the N-terminus, the 433-residue chain is Zinc finger and SCAN domain-containing protein 4 (433 aa).

Positions 44 to 126 constitute an SCAN box domain; the sequence is RMVLNSFQDS…RFIEDLTDDS (83 aa). 3 stretches are compositionally biased toward polar residues: residues 165–185, 195–210, and 277–299; these read TTRE…SLET, GWNS…ENIT, and QPEQ…STCE. Disordered regions lie at residues 165-210 and 275-301; these read TTRE…ENIT and ISQP…CEVH. 4 C2H2-type zinc fingers span residues 312–334, 340–362, 368–390, and 396–418; these read YKCE…QRRH, FVCP…QIIH, FTCS…ERIH, and YTCP…MRTH.

It localises to the nucleus. It is found in the chromosome. The protein resides in the telomere. Its function is as follows. Embryonic stem (ES) cell-specific transcription factor required to regulate ES cell pluripotency. Binds telomeres and plays a key role in genomic stability in ES cells by regulating telomere elongation. Acts as an activator of spontaneous telomere sister chromatid exchange (T-SCE) and telomere elongation in undifferentiated ES cells. The chain is Zinc finger and SCAN domain-containing protein 4 (ZSCAN4) from Homo sapiens (Human).